A 353-amino-acid chain; its full sequence is Histidinol-phosphate aminotransferase (353 aa).

N6-(pyridoxal phosphate)lysine is present on Lys-211.

It belongs to the class-II pyridoxal-phosphate-dependent aminotransferase family. Histidinol-phosphate aminotransferase subfamily. In terms of assembly, homodimer. Requires pyridoxal 5'-phosphate as cofactor.

The catalysed reaction is L-histidinol phosphate + 2-oxoglutarate = 3-(imidazol-4-yl)-2-oxopropyl phosphate + L-glutamate. The protein operates within amino-acid biosynthesis; L-histidine biosynthesis; L-histidine from 5-phospho-alpha-D-ribose 1-diphosphate: step 7/9. In Marinomonas sp. (strain MWYL1), this protein is Histidinol-phosphate aminotransferase.